Consider the following 217-residue polypeptide: Ras-related protein RGP2 (217 aa).

Residues 19 to 26, 67 to 71, and 125 to 128 contribute to the GTP site; these read GDSGVGKS, DTAGQ, and NKSD. S-geranylgeranyl cysteine attachment occurs at residues Cys-214 and Cys-215.

Belongs to the small GTPase superfamily. Rab family.

It localises to the cell membrane. The sequence is that of Ras-related protein RGP2 (RGP2) from Oryza sativa subsp. japonica (Rice).